The primary structure comprises 168 residues: Photosystem I assembly protein Ycf3 (168 aa).

TPR repeat units follow at residues 35 to 68, 72 to 105, and 120 to 153; these read AFTY…EIDP, SYIL…NPFL, and GEQA…TPGN.

The protein belongs to the Ycf3 family.

It localises to the plastid. The protein resides in the chloroplast thylakoid membrane. Essential for the assembly of the photosystem I (PSI) complex. May act as a chaperone-like factor to guide the assembly of the PSI subunits. This Drimys granadensis protein is Photosystem I assembly protein Ycf3.